The primary structure comprises 180 residues: O-acetyl-ADP-ribose deacetylase (180 aa).

The region spanning 1–175 (MKPQIEVVVG…LYQRLLIQRG (175 aa)) is the Macro domain. Substrate is bound by residues 11–12 (DI), Asn25, 33–35 (GVD), and 122–126 (STGVY). Catalysis depends on Asp35, which acts as the Proton acceptor.

The protein belongs to the MacroD-type family. YmdB subfamily. Homodimer. Interacts with RNase III.

It catalyses the reaction 3''-O-acetyl-ADP-D-ribose + H2O = ADP-D-ribose + acetate + H(+). The enzyme catalyses 2''-O-acetyl-ADP-D-ribose + H2O = ADP-D-ribose + acetate + H(+). In terms of biological role, deacetylates O-acetyl-ADP ribose to yield ADP-ribose and free acetate. Down-regulates ribonuclease 3 (RNase III) activity. Acts by interacting directly with the region of the ribonuclease that is required for dimerization/activation. This Enterobacter sp. (strain 638) protein is O-acetyl-ADP-ribose deacetylase.